The chain runs to 242 residues: Demethylmenaquinone methyltransferase (242 aa).

S-adenosyl-L-methionine is bound by residues Thr74 and Asp93.

This sequence belongs to the class I-like SAM-binding methyltransferase superfamily. MenG/UbiE family.

The enzyme catalyses a 2-demethylmenaquinol + S-adenosyl-L-methionine = a menaquinol + S-adenosyl-L-homocysteine + H(+). Its pathway is quinol/quinone metabolism; menaquinone biosynthesis; menaquinol from 1,4-dihydroxy-2-naphthoate: step 2/2. Methyltransferase required for the conversion of demethylmenaquinol (DMKH2) to menaquinol (MKH2). The chain is Demethylmenaquinone methyltransferase from Chlorobaculum tepidum (strain ATCC 49652 / DSM 12025 / NBRC 103806 / TLS) (Chlorobium tepidum).